The sequence spans 546 residues: Chaperonin GroEL 1 (546 aa).

ATP contacts are provided by residues 30-33, Lys-51, 87-91, Gly-415, 479-481, and Asp-495; these read TLGP, DGTTT, and NAA. The interval 526–546 is disordered; the sequence is KEDAPMPGGMPGGMGGMGMDM. A compositionally biased stretch (gly residues) spans 534–546; that stretch reads GMPGGMGGMGMDM.

Belongs to the chaperonin (HSP60) family. As to quaternary structure, forms a cylinder of 14 subunits composed of two heptameric rings stacked back-to-back. Interacts with the co-chaperonin GroES.

Its subcellular location is the cytoplasm. It carries out the reaction ATP + H2O + a folded polypeptide = ADP + phosphate + an unfolded polypeptide.. Together with its co-chaperonin GroES, plays an essential role in assisting protein folding. The GroEL-GroES system forms a nano-cage that allows encapsulation of the non-native substrate proteins and provides a physical environment optimized to promote and accelerate protein folding. The polypeptide is Chaperonin GroEL 1 (Burkholderia pseudomallei (strain K96243)).